Reading from the N-terminus, the 457-residue chain is F-box/LRR-repeat protein At3g62440 (457 aa).

The F-box domain occupies 1–49 (MDRISNLPDEIICHIGSFLSAREAAFTTVLSKRWHNLFTIVPDLHFDSS). LRR repeat units follow at residues 53 to 79 (GESL…SLKW), 147 to 174 (LSLG…SLYH), 177 to 202 (FYEF…TVCG), 229 to 254 (WDAF…YYSD), 283 to 310 (WGKG…NLYT), and 337 to 362 (LSNF…NIDG).

This is F-box/LRR-repeat protein At3g62440 from Arabidopsis thaliana (Mouse-ear cress).